The chain runs to 274 residues: Nickel/cobalt efflux system RcnA (274 aa).

The Periplasmic portion of the chain corresponds to 1 to 12 (MTEFTTLLQQGN). The helical transmembrane segment at 13–33 (AWFFIPSAILLGALHGLEPGH) threads the bilayer. Residues 34–56 (SKTMMAAFIIAIKGTIKQAVMLG) lie on the Cytoplasmic side of the membrane. A helical transmembrane segment spans residues 57-77 (LAATISHTAVVWLIAFGGMVI). Residues 78–86 (SKRFTAQSA) lie on the Periplasmic side of the membrane. A helical transmembrane segment spans residues 87 to 107 (EPWLQLISAVIIISTAFWMFW). The Cytoplasmic segment spans residues 108–175 (RTWRGERNWL…DGREVTNWQI (68 aa)). The tract at residues 127-153 (HHHHDHEHHHDHGHHHHHEHGEYQDAH) is disordered. Residues 129–144 (HHDHEHHHDHGHHHHH) show a composition bias toward basic residues. A helical membrane pass occupies residues 176 to 196 (LLFGLTGGLIPCPAAITVLLI). The Periplasmic segment spans residues 197-209 (CIQLKALTLGATL). Residues 210-230 (VVSFSIGLALTLVTVGVGAAI) form a helical membrane-spanning segment. At 231–251 (SVQQVAKRWSGFNTLAKRAPY) the chain is on the cytoplasmic side. Residues 252–272 (FSSLLIGLVGVYMGVHGFMGI) traverse the membrane as a helical segment. Topologically, residues 273–274 (MR) are periplasmic.

The protein belongs to the NiCoT transporter (TC 2.A.52) family. RcnA subfamily.

It localises to the cell inner membrane. Its function is as follows. Efflux system for nickel and cobalt. The chain is Nickel/cobalt efflux system RcnA (rcnA) from Escherichia coli (strain K12).